A 157-amino-acid polypeptide reads, in one-letter code: MTEKKARPIKVVAENRKARFNYSIEDTFEAGVMLTGTEVKSARNGKSTISESYADSKNGEIWLVNANIPEYLQANRFNHEPRRPRKLLLHKRQINKLIGAIEREGMTLIPLKMYFNEQGRLKLELALAKGKKLHDKRETEKKRDWSREKSRLLRARG.

The tract at residues 133–157 is disordered; that stretch reads LHDKRETEKKRDWSREKSRLLRARG. Residues 135–151 are compositionally biased toward basic and acidic residues; sequence DKRETEKKRDWSREKSR.

The protein belongs to the SmpB family.

It is found in the cytoplasm. Required for rescue of stalled ribosomes mediated by trans-translation. Binds to transfer-messenger RNA (tmRNA), required for stable association of tmRNA with ribosomes. tmRNA and SmpB together mimic tRNA shape, replacing the anticodon stem-loop with SmpB. tmRNA is encoded by the ssrA gene; the 2 termini fold to resemble tRNA(Ala) and it encodes a 'tag peptide', a short internal open reading frame. During trans-translation Ala-aminoacylated tmRNA acts like a tRNA, entering the A-site of stalled ribosomes, displacing the stalled mRNA. The ribosome then switches to translate the ORF on the tmRNA; the nascent peptide is terminated with the 'tag peptide' encoded by the tmRNA and targeted for degradation. The ribosome is freed to recommence translation, which seems to be the essential function of trans-translation. This is SsrA-binding protein from Afipia carboxidovorans (strain ATCC 49405 / DSM 1227 / KCTC 32145 / OM5) (Oligotropha carboxidovorans).